We begin with the raw amino-acid sequence, 169 residues long: MANERNQQNLTSLRGSLTGVETFYVVDYQGLTAGQLSQLRKNIREKGGQLIVAKNTLINLALQESGRDFSDALKGPSALVLAQEDPAGVAKALSDAAKGNDKGIPAIKGGFVEGNRVDVRVVERLASLGSKQSLQGELVGVLSAHLSNFVGILEAYRDKLGGGAAEAQG.

The protein belongs to the universal ribosomal protein uL10 family. Part of the ribosomal stalk of the 50S ribosomal subunit. The N-terminus interacts with L11 and the large rRNA to form the base of the stalk. The C-terminus forms an elongated spine to which L12 dimers bind in a sequential fashion forming a multimeric L10(L12)X complex.

Functionally, forms part of the ribosomal stalk, playing a central role in the interaction of the ribosome with GTP-bound translation factors. The polypeptide is Large ribosomal subunit protein uL10 (Deinococcus geothermalis (strain DSM 11300 / CIP 105573 / AG-3a)).